Reading from the N-terminus, the 294-residue chain is MEIGLREWLILIGIIVIAGILFDGWRRMRGGKGKLKFRLDRSYANAPDDEGGAEVLGPSRVLETHKEPELDESDLPSVSAPARERERDPKPAKASKRGKRNHSEPQQGDLNLAAEAREPDLFADDKDDFVADNNRHGAAATPSTPVKELPPAEEVLVISVISRDEGGFKGPALLQNILESGLRFGEMDIFHRHESMAGHGEVLFSMANAVKPGVFDLDDIDHFSTRAVSFFLGLPGPRHPKQAFDVMVAAARKLAHELDGELKDDQRSVLTAQTIEHYRQRIVEFERRALTQKR.

Met1 is a topological domain (periplasmic). The helical transmembrane segment at 2–22 (EIGLREWLILIGIIVIAGILF) threads the bilayer. Residues 23–294 (DGWRRMRGGK…FERRALTQKR (272 aa)) lie on the Cytoplasmic side of the membrane. 2 disordered regions span residues 64–111 (THKE…GDLN) and 126–146 (KDDF…STPV). Positions 82–91 (ARERERDPKP) are enriched in basic and acidic residues.

The protein belongs to the ZipA family. Interacts with FtsZ via their C-terminal domains.

The protein resides in the cell inner membrane. Its function is as follows. Essential cell division protein that stabilizes the FtsZ protofilaments by cross-linking them and that serves as a cytoplasmic membrane anchor for the Z ring. Also required for the recruitment to the septal ring of downstream cell division proteins. This Pseudomonas entomophila (strain L48) protein is Cell division protein ZipA.